The chain runs to 162 residues: Disulfide bond formation protein B (162 aa).

Residues 1–10 (MGDWLLRRRG) lie on the Cytoplasmic side of the membrane. The chain crosses the membrane as a helical span at residues 11–27 (LALLLVLTLLLNLGALG). At 28 to 45 (LEYLADMPPCPLCWVQRG) the chain is on the periplasmic side. Cysteine 37 and cysteine 40 form a disulfide bridge. The helical transmembrane segment at 46 to 62 (VFGLMSLVALVGLVYFP) threads the bilayer. At 63–68 (RGWGRW) the chain is on the cytoplasmic side. The helical transmembrane segment at 69–86 (PLAGALGLSALTGVIIAL) threads the bilayer. Residues 87-140 (RHLYIQANPDAVSCGMSPEVLAQFLPWWEVLLEILSGTTDCTQVDAVLGVPLPG) lie on the Periplasmic side of the membrane. Residues cysteine 100 and cysteine 127 are joined by a disulfide bond. The chain crosses the membrane as a helical span at residues 141–159 (WTLVGYLALGALGLYAVLA). Topologically, residues 160 to 162 (RRA) are cytoplasmic.

The protein belongs to the DsbB family.

The protein localises to the cell inner membrane. In terms of biological role, required for disulfide bond formation in some periplasmic proteins. Acts by oxidizing the DsbA protein. In Alkalilimnicola ehrlichii (strain ATCC BAA-1101 / DSM 17681 / MLHE-1), this protein is Disulfide bond formation protein B.